A 197-amino-acid polypeptide reads, in one-letter code: 3-isopropylmalate dehydratase small subunit (197 aa).

This sequence belongs to the LeuD family. LeuD type 1 subfamily. As to quaternary structure, heterodimer of LeuC and LeuD.

The enzyme catalyses (2R,3S)-3-isopropylmalate = (2S)-2-isopropylmalate. The protein operates within amino-acid biosynthesis; L-leucine biosynthesis; L-leucine from 3-methyl-2-oxobutanoate: step 2/4. Functionally, catalyzes the isomerization between 2-isopropylmalate and 3-isopropylmalate, via the formation of 2-isopropylmaleate. The chain is 3-isopropylmalate dehydratase small subunit from Mycolicibacterium vanbaalenii (strain DSM 7251 / JCM 13017 / BCRC 16820 / KCTC 9966 / NRRL B-24157 / PYR-1) (Mycobacterium vanbaalenii).